The primary structure comprises 334 residues: Methionine adenosyltransferase 2 subunit beta (334 aa).

Residues 37-40 (TGLL), 60-62 (FRR), 71-72 (NL), C93, R97, Y159, and L185 each bind NADP(+). Phosphothreonine is present on T309. The interval 319-334 (LWPFLIDKRWRQTVFH) is required for interaction with MAT2A.

Belongs to the dTDP-4-dehydrorhamnose reductase family. MAT2B subfamily. As to quaternary structure, heterotrimer; composed of a catalytic MAT2A homodimer that binds one regulatory MAT2B chain. Heterohexamer; composed of a central, catalytic MAT2A homotetramer flanked on either side by a regulatory MAT2B chain. NADP binding increases the affinity for MAT2A.

The protein operates within amino-acid biosynthesis; S-adenosyl-L-methionine biosynthesis; S-adenosyl-L-methionine from L-methionine: step 1/1. Regulatory subunit of S-adenosylmethionine synthetase 2, an enzyme that catalyzes the formation of S-adenosylmethionine from methionine and ATP. Regulates MAT2A catalytic activity by changing its kinetic properties, increasing its affinity for L-methionine. Can bind NADP (in vitro). This Mus musculus (Mouse) protein is Methionine adenosyltransferase 2 subunit beta (Mat2b).